The primary structure comprises 189 residues: dCTP deaminase (189 aa).

Residues 112-117 (KSTYAR), 136-138 (TLE), Gln157, Tyr171, and Gln181 contribute to the dCTP site. Glu138 acts as the Proton donor/acceptor in catalysis.

The protein belongs to the dCTP deaminase family. In terms of assembly, homotrimer.

It carries out the reaction dCTP + H2O + H(+) = dUTP + NH4(+). It functions in the pathway pyrimidine metabolism; dUMP biosynthesis; dUMP from dCTP (dUTP route): step 1/2. Its function is as follows. Catalyzes the deamination of dCTP to dUTP. The chain is dCTP deaminase from Teredinibacter turnerae (strain ATCC 39867 / T7901).